The primary structure comprises 306 residues: S-methyl-5'-thioadenosine phosphorylase (306 aa).

Residues threonine 21, 63–64 (RH), and 96–97 (SA) each bind phosphate. Methionine 198 lines the substrate pocket. Serine 199 contacts phosphate. Residue 222 to 224 (DYD) participates in substrate binding.

The protein belongs to the PNP/MTAP phosphorylase family. MTAP subfamily. In terms of assembly, homotrimer.

The protein resides in the cytoplasm. The protein localises to the nucleus. It catalyses the reaction S-methyl-5'-thioadenosine + phosphate = 5-(methylsulfanyl)-alpha-D-ribose 1-phosphate + adenine. Its pathway is amino-acid biosynthesis; L-methionine biosynthesis via salvage pathway; S-methyl-5-thio-alpha-D-ribose 1-phosphate from S-methyl-5'-thioadenosine (phosphorylase route): step 1/1. In terms of biological role, catalyzes the reversible phosphorylation of S-methyl-5'-thioadenosine (MTA) to adenine and 5-methylthioribose-1-phosphate. Involved in the breakdown of MTA, a major by-product of polyamine biosynthesis. Responsible for the first step in the methionine salvage pathway after MTA has been generated from S-adenosylmethionine. Has broad substrate specificity with 6-aminopurine nucleosides as preferred substrates. In Sclerotinia sclerotiorum (strain ATCC 18683 / 1980 / Ss-1) (White mold), this protein is S-methyl-5'-thioadenosine phosphorylase.